Consider the following 164-residue polypeptide: Thioredoxin domain-containing protein R443 (164 aa).

The helical transmembrane segment at 8–28 (HIVLIVLAIILILWIISLLLC) threads the bilayer. Residues 36 to 163 (YQVPIIQPMQ…LTQFIRSNMN (128 aa)) enclose the Thioredoxin domain. Cysteine 84 and cysteine 87 are oxidised to a cystine.

The protein belongs to the thioredoxin family.

The protein localises to the host membrane. It localises to the virion. The chain is Thioredoxin domain-containing protein R443 from Acanthamoeba polyphaga mimivirus (APMV).